We begin with the raw amino-acid sequence, 205 residues long: Non-structural protein NS3 (205 aa).

The disordered stretch occupies residues 177–205 (GTRSPETGCRKVTSGLPHGASGGSGTRQG). Residues 196–205 (ASGGSGTRQG) show a composition bias toward gly residues.

Belongs to the orbivirus NS3 family.

May play a role in the release of virions from infected cells. In Broadhaven virus (BRD), this protein is Non-structural protein NS3 (Segment-10).